Consider the following 312-residue polypeptide: Aspartate carbamoyltransferase catalytic subunit (312 aa).

The carbamoyl phosphate site is built by Arg-55 and Thr-56. L-aspartate is bound at residue Lys-83. Residues Arg-105, His-138, and Gln-141 each coordinate carbamoyl phosphate. Positions 171 and 225 each coordinate L-aspartate. Gly-266 and Pro-267 together coordinate carbamoyl phosphate.

Belongs to the aspartate/ornithine carbamoyltransferase superfamily. ATCase family. As to quaternary structure, heterododecamer (2C3:3R2) of six catalytic PyrB chains organized as two trimers (C3), and six regulatory PyrI chains organized as three dimers (R2).

The catalysed reaction is carbamoyl phosphate + L-aspartate = N-carbamoyl-L-aspartate + phosphate + H(+). It functions in the pathway pyrimidine metabolism; UMP biosynthesis via de novo pathway; (S)-dihydroorotate from bicarbonate: step 2/3. In terms of biological role, catalyzes the condensation of carbamoyl phosphate and aspartate to form carbamoyl aspartate and inorganic phosphate, the committed step in the de novo pyrimidine nucleotide biosynthesis pathway. The chain is Aspartate carbamoyltransferase catalytic subunit from Corynebacterium glutamicum (strain R).